Reading from the N-terminus, the 82-residue chain is Small ribosomal subunit protein uS17 (82 aa).

Belongs to the universal ribosomal protein uS17 family. As to quaternary structure, part of the 30S ribosomal subunit.

One of the primary rRNA binding proteins, it binds specifically to the 5'-end of 16S ribosomal RNA. The polypeptide is Small ribosomal subunit protein uS17 (Shewanella pealeana (strain ATCC 700345 / ANG-SQ1)).